Consider the following 175-residue polypeptide: ATP synthase subunit b (175 aa).

The helical transmembrane segment at 19–39 threads the bilayer; the sequence is LVVGTIAFALLVFVLLKFVMP.

This sequence belongs to the ATPase B chain family. As to quaternary structure, F-type ATPases have 2 components, F(1) - the catalytic core - and F(0) - the membrane proton channel. F(1) has five subunits: alpha(3), beta(3), gamma(1), delta(1), epsilon(1). F(0) has three main subunits: a(1), b(2) and c(10-14). The alpha and beta chains form an alternating ring which encloses part of the gamma chain. F(1) is attached to F(0) by a central stalk formed by the gamma and epsilon chains, while a peripheral stalk is formed by the delta and b chains.

The protein resides in the cell membrane. In terms of biological role, f(1)F(0) ATP synthase produces ATP from ADP in the presence of a proton or sodium gradient. F-type ATPases consist of two structural domains, F(1) containing the extramembraneous catalytic core and F(0) containing the membrane proton channel, linked together by a central stalk and a peripheral stalk. During catalysis, ATP synthesis in the catalytic domain of F(1) is coupled via a rotary mechanism of the central stalk subunits to proton translocation. Component of the F(0) channel, it forms part of the peripheral stalk, linking F(1) to F(0). The polypeptide is ATP synthase subunit b (Salinispora tropica (strain ATCC BAA-916 / DSM 44818 / JCM 13857 / NBRC 105044 / CNB-440)).